Consider the following 49-residue polypeptide: MRVNITLECTECGDRNYITTKNKRENPERIELKKYCPRLRRVTLHRETK.

Belongs to the bacterial ribosomal protein bL33 family.

The protein is Large ribosomal subunit protein bL33B of Listeria welshimeri serovar 6b (strain ATCC 35897 / DSM 20650 / CCUG 15529 / CIP 8149 / NCTC 11857 / SLCC 5334 / V8).